A 169-amino-acid polypeptide reads, in one-letter code: uncharacterized protein (169 aa).

In terms of domain architecture, Nudix hydrolase spans 28-157; the sequence is ELHLVVHVCI…EFIPYFFLNQ (130 aa). Residues 65–87 carry the Nudix box motif; it reads AGSALKGETSRQAAEREVKEELG. Residues Glu-81 and Glu-85 each contribute to the Mg(2+) site.

The protein belongs to the Nudix hydrolase family. The cofactor is Mg(2+).

This is an uncharacterized protein from Listeria innocua serovar 6a (strain ATCC BAA-680 / CLIP 11262).